Here is a 339-residue protein sequence, read N- to C-terminus: Cyclin-Y-like protein 1-A (339 aa).

A compositionally biased stretch (polar residues) spans 1 to 13; sequence MGNTVTCCVSPDS. Residues 1–42 form a disordered region; it reads MGNTVTCCVSPDSSPKEGRDREVTESGEPYQAQGEPQDGDVQ. The segment covering 14–24 has biased composition (basic and acidic residues); it reads SPKEGRDREVT. The 123-residue stretch at 141–263 folds into the Cyclin N-terminal domain; sequence DIFDEKLHPI…FLELLQFNIN (123 aa).

The protein belongs to the cyclin family. Cyclin Y subfamily.

The protein is Cyclin-Y-like protein 1-A (ccnyl1-a) of Xenopus laevis (African clawed frog).